Reading from the N-terminus, the 885-residue chain is Chitobiase (885 aa).

The N-terminal stretch at 1-27 is a signal peptide; sequence MNAFKLSALARLTATMGFLGGMGSAMA. 3 disulfide bridges follow: Cys-56–Cys-66, Cys-400–Cys-408, and Cys-505–Cys-578. The Proton donor role is filled by Glu-540. The disordered stretch occupies residues 866–885; sequence EVQVRSVSPDGKRYSRAEKV. A compositionally biased stretch (basic and acidic residues) spans 875–885; that stretch reads DGKRYSRAEKV.

The protein belongs to the glycosyl hydrolase 20 family. Monomer.

The protein localises to the periplasm. It catalyses the reaction Hydrolysis of terminal non-reducing N-acetyl-D-hexosamine residues in N-acetyl-beta-D-hexosaminides.. The protein operates within glycan degradation; chitin degradation. Its function is as follows. Digests the beta-1,4-glycosidic bonds in N-acetylglucosamine (GlcNAc) oligomers (mainly dimers). The sequence is that of Chitobiase (chb) from Serratia marcescens.